A 354-amino-acid polypeptide reads, in one-letter code: S-adenosylmethionine-dependent nucleotide dehydratase RSAD2 (354 aa).

Positions 62–282 (AMTPTSVNYH…LDRHSSISCL (221 aa)) constitute a Radical SAM core domain. Residues Cys76, Cys80, and Cys83 each coordinate [4Fe-4S] cluster.

The protein belongs to the radical SAM superfamily. RSAD2 family. It depends on [4Fe-4S] cluster as a cofactor. As to expression, constitutively expressed in spleen, head kidney and trunk kidney. Following viral infection, detected in most organs including liver, gill, intestine, heart, muscle and brain.

Its subcellular location is the endoplasmic reticulum membrane. Its function is as follows. Interferon-inducible iron-sulfur (4FE-4S) cluster-binding antiviral protein which plays a major role in the cell antiviral state induced by type I and type II interferon. The sequence is that of S-adenosylmethionine-dependent nucleotide dehydratase RSAD2 from Siniperca chuatsi (Mandarin fish).